A 389-amino-acid chain; its full sequence is Succinate--CoA ligase [ADP-forming] subunit beta (389 aa).

In terms of domain architecture, ATP-grasp spans Lys-9–Glu-244. ATP-binding positions include Lys-46, Gly-53–Gly-55, Glu-99, Ala-102, and Glu-107. Asn-199 and Asp-213 together coordinate Mg(2+). Residues Asn-264 and Gly-321–Met-323 each bind substrate.

This sequence belongs to the succinate/malate CoA ligase beta subunit family. As to quaternary structure, heterotetramer of two alpha and two beta subunits. The cofactor is Mg(2+).

It carries out the reaction succinate + ATP + CoA = succinyl-CoA + ADP + phosphate. The enzyme catalyses GTP + succinate + CoA = succinyl-CoA + GDP + phosphate. It participates in carbohydrate metabolism; tricarboxylic acid cycle; succinate from succinyl-CoA (ligase route): step 1/1. In terms of biological role, succinyl-CoA synthetase functions in the citric acid cycle (TCA), coupling the hydrolysis of succinyl-CoA to the synthesis of either ATP or GTP and thus represents the only step of substrate-level phosphorylation in the TCA. The beta subunit provides nucleotide specificity of the enzyme and binds the substrate succinate, while the binding sites for coenzyme A and phosphate are found in the alpha subunit. The protein is Succinate--CoA ligase [ADP-forming] subunit beta of Polynucleobacter asymbioticus (strain DSM 18221 / CIP 109841 / QLW-P1DMWA-1) (Polynucleobacter necessarius subsp. asymbioticus).